Consider the following 217-residue polypeptide: MSKITTTHVRDNVKELLKYSNETKKRNFLETVELQVGLKNYDPQRDKRFSGTLKLPVCPRPNMSVCIFGDAFDVDRAKSCGVDAMSVDDLKKLNKNKKLIKKLAKKYNAFIASEVLIKQVPRLLGPQLSKAGKFPTPVSHNDDLYSKVTDVRSTIKFQLKKVLCLAVAVGNVEMDEDTLVNQILMSVNFLVSLLKKNWQNVGSLVIKSTMGPAFRLY.

Belongs to the universal ribosomal protein uL1 family.

This Eremothecium gossypii (strain ATCC 10895 / CBS 109.51 / FGSC 9923 / NRRL Y-1056) (Yeast) protein is Large ribosomal subunit protein uL1 (RPL10A).